The chain runs to 919 residues: MVGSRSASHQKTVKIVPMTNRADKLPKSWDPQAVEKDLYEGWVEKGYFTADPSSSKPAFSIVLPPPNVTGQLHMGHALDHTLMDGIARRKRMQGYEVLWLPGMDHAGIATQTKVEAMLKETEGKSRWDYSREEFIEHVWEWKRKFGGTIGTQMRAIGDSVDWSRERFTLDEGLSRAVQTIFKQMYDRGMIYQANRLVNWSPILETAVSDIEVVYKDVEGELVSIRYGSLNDDEPHVIVATTRVETMLGDVAVAVHPDDERYADLVGTTLPHPFLPDRQMIVVADDYVDPEFGTGAVKITPAHDPNDYALGLRHNLDMPNIMDATGHIAGTGTQFDGMDRFEARVKIREALAEQGRIVKEVRPYVHSVGHSERSGEPIEPRLSLQWWVKVEKLATMAGDAIREGDTVIHPKSSEPRYFDWVDDMHDWCISRQLWWGHRIPIWYGPEDAEGNRDIVCVGPDEQPPAGYEQDPDVLDTWFSSALWPFSTMGWPDKTPELDKFYPTSVLVTAYDILFFWVARMMMFGTLAGETTPEILGQGTDGRPQIPFNDLFLHGLVRDEQGRKMSKSLGNGIDPMDWVERFGADALRFTLARGANPGVDLPVGEDSAQSSRNFATKLFNATKFALMNGAEVGTLPERSELTDADRWILDRLEEVRVSVDDYFDRYQFAKGNEALYQFAWGEFCDWYLEIAKVQIPRDMEAASAQEQARGRNTQIVLGQVLDALLRMLHPAMPFVTEVLWKALTDGESLNVAEWPTAAMTNGGVATDEVAARRMADVEKLVTEIRRFRSDQGVKPSQKVPGAVDFAAADLAAQEDLVRSLARLDQPAEDFAASASIEVRLSQATIEISVDTSGTVDKEAERKRLDKDLAAATKELETTAKKLGNESFLAKAPEAVVAKIRERQQIAQEEVARISARLEELK.

The 'HIGH' region signature appears at P66–H76. Residues K562–S566 carry the 'KMSKS' region motif. Residue K565 coordinates ATP. Residues T852–K919 adopt a coiled-coil conformation.

The protein belongs to the class-I aminoacyl-tRNA synthetase family. ValS type 1 subfamily. In terms of assembly, monomer.

It localises to the cytoplasm. It carries out the reaction tRNA(Val) + L-valine + ATP = L-valyl-tRNA(Val) + AMP + diphosphate. In terms of biological role, catalyzes the attachment of valine to tRNA(Val). As ValRS can inadvertently accommodate and process structurally similar amino acids such as threonine, to avoid such errors, it has a 'posttransfer' editing activity that hydrolyzes mischarged Thr-tRNA(Val) in a tRNA-dependent manner. This chain is Valine--tRNA ligase, found in Corynebacterium diphtheriae (strain ATCC 700971 / NCTC 13129 / Biotype gravis).